The primary structure comprises 432 residues: Glutamate-1-semialdehyde 2,1-aminomutase (432 aa).

Lys272 carries the N6-(pyridoxal phosphate)lysine modification.

This sequence belongs to the class-III pyridoxal-phosphate-dependent aminotransferase family. HemL subfamily. Homodimer. Requires pyridoxal 5'-phosphate as cofactor.

It is found in the cytoplasm. The catalysed reaction is (S)-4-amino-5-oxopentanoate = 5-aminolevulinate. Its pathway is porphyrin-containing compound metabolism; protoporphyrin-IX biosynthesis; 5-aminolevulinate from L-glutamyl-tRNA(Glu): step 2/2. It participates in porphyrin-containing compound metabolism; chlorophyll biosynthesis. This chain is Glutamate-1-semialdehyde 2,1-aminomutase, found in Acaryochloris marina (strain MBIC 11017).